Here is a 185-residue protein sequence, read N- to C-terminus: Large ribosomal subunit protein uL5 (185 aa).

The protein belongs to the universal ribosomal protein uL5 family. As to quaternary structure, part of the 50S ribosomal subunit; part of the 5S rRNA/L5/L18/L25 subcomplex. Contacts the 5S rRNA and the P site tRNA. Forms a bridge to the 30S subunit in the 70S ribosome.

Its function is as follows. This is one of the proteins that bind and probably mediate the attachment of the 5S RNA into the large ribosomal subunit, where it forms part of the central protuberance. In the 70S ribosome it contacts protein S13 of the 30S subunit (bridge B1b), connecting the 2 subunits; this bridge is implicated in subunit movement. Contacts the P site tRNA; the 5S rRNA and some of its associated proteins might help stabilize positioning of ribosome-bound tRNAs. The polypeptide is Large ribosomal subunit protein uL5 (Rhizobium etli (strain CIAT 652)).